The following is an 857-amino-acid chain: MAFPAPAFSLANLLNGSYGVDTPEDVERLRSEQREEAAAACRNYRPLPAVDVSESVSEDAHSLQTPDGAPAEAVSDEFVTYGAEDYLEKSDDELLVAFETMVKPMRIGQLWCPAFNKCSFISSIAMARALLLAPRTSHRTMKCFEDLVAAIYTKSDFYYSEECEADDIQMDISSRDVPGYSFEPWSRTSGFEPPPICEACDMIMYQCPCFDFNALKKSCAERTFADDYVIEGLDGVVDNATLLSNLGPFLVPVKCQYEKCPTPTIAIPPNLNRATDRVDINLVQSICDSTLPTHSNYDDSFHQVFVESADYSIDLDHVRLRQSDLIAKIPDSGHMIPVLNTGSGHKRVGTTKEVLTAIKKRNADVPELGDSVNLSRLSKAVAERFFISYINGNSLASSNFVNVVSNFHDYMEKWKSSGLSYDDLPDLHAENLQFYDHMIKSDVKPVVSDTLNIDRPVPATITYHKKSITSQFSPLFTALFERFQRCLRERIILPVGKISSLEMAGFDVKSKYCLEIDLSKFDKSQGEFHLLIQEHILNGLGCPAPITKWWCDFHRFSYIRDRRAGVGMPISFQRRTGDAFTYFGNTIVTMAEFAWCYDTDQFEKLLFSGDDSLGFSLLPPVGDPSKFTTLYNMEAKVMEPSVPYICSKFLLSDEFGNTFSVPDPLREVQRLGTKKIPYSDNDEFLFAHFMSFVDRLKFLDRMSQSCIDQLSIFFELKYKKSGEEAALMLGAFKKYTANFQSYKELYYSDRRQCELINSFCSTEFRVERVNSNKLRKKYGIERRCDDKRRTPTGSYGGGEEAETKVSQTKSTGTRSQKSQRESAFKSQTVPLPTVLSSGWSGTDRVVPPRERGGVTRA.

Positions 511–624 constitute a RdRp catalytic domain; the sequence is KYCLEIDLSK…FSLLPPVGDP (114 aa). A disordered region spans residues 785-857; the sequence is DDKRRTPTGS…PRERGGVTRA (73 aa). 2 stretches are compositionally biased toward polar residues: residues 804 to 816 and 824 to 840; these read KVSQTKSTGTRSQ and FKSQTVPLPTVLSSGWS. Basic and acidic residues predominate over residues 846 to 857; it reads VPPRERGGVTRA.

Belongs to the ssRNA positive-strand viruses RNA-directed RNA polymerase family. As to quaternary structure, interacts with replication protein 1a.

It catalyses the reaction RNA(n) + a ribonucleoside 5'-triphosphate = RNA(n+1) + diphosphate. Functionally, RNA-dependent RNA polymerase which replicates the viral genome composed of 3 RNA segments, RNA1, RNA2 and RNA3. The protein is RNA-directed RNA polymerase 2a of Cucumis sativus (Cucumber).